We begin with the raw amino-acid sequence, 395 residues long: Flap endonuclease 1 (395 aa).

The N-domain stretch occupies residues 1–104 (MGIKQLFQII…GELAKRFQRK (104 aa)). Mg(2+) is bound at residue aspartate 34. The DNA site is built by arginine 47 and arginine 70. Mg(2+) is bound by residues aspartate 86, glutamate 158, glutamate 160, aspartate 179, and aspartate 181. The interval 122–253 (DIEKFSRRTV…TTALKLIRDH (132 aa)) is I-domain. Glutamate 158 contributes to the DNA binding site. Positions 231 and 233 each coordinate DNA. Aspartate 233 is a binding site for Mg(2+). The segment at 341–349 (QQARLEGFF) is interaction with PCNA. Positions 344–395 (RLEGFFKPVPKTDAQKAAHKRKLEEKNEEKKKKLKQEKKDKAAAKSKPRGAA) are disordered. Positions 365–386 (KLEEKNEEKKKKLKQEKKDKAA) are enriched in basic and acidic residues.

The protein belongs to the XPG/RAD2 endonuclease family. FEN1 subfamily. Interacts with PCNA. Three molecules of FEN1 bind to one PCNA trimer with each molecule binding to one PCNA monomer. PCNA stimulates the nuclease activity without altering cleavage specificity. Requires Mg(2+) as cofactor. In terms of processing, phosphorylated. Phosphorylation upon DNA damage induces relocalization to the nuclear plasma.

Its subcellular location is the nucleus. It is found in the nucleolus. It localises to the nucleoplasm. The protein resides in the mitochondrion. Structure-specific nuclease with 5'-flap endonuclease and 5'-3' exonuclease activities involved in DNA replication and repair. During DNA replication, cleaves the 5'-overhanging flap structure that is generated by displacement synthesis when DNA polymerase encounters the 5'-end of a downstream Okazaki fragment. It enters the flap from the 5'-end and then tracks to cleave the flap base, leaving a nick for ligation. Also involved in the long patch base excision repair (LP-BER) pathway, by cleaving within the apurinic/apyrimidinic (AP) site-terminated flap. Acts as a genome stabilization factor that prevents flaps from equilibrating into structures that lead to duplications and deletions. Also possesses 5'-3' exonuclease activity on nicked or gapped double-stranded DNA, and exhibits RNase H activity. Also involved in replication and repair of rDNA and in repairing mitochondrial DNA. This is Flap endonuclease 1 from Fusarium vanettenii (strain ATCC MYA-4622 / CBS 123669 / FGSC 9596 / NRRL 45880 / 77-13-4) (Fusarium solani subsp. pisi).